Here is a 290-residue protein sequence, read N- to C-terminus: Protease HtpX (290 aa).

Transmembrane regions (helical) follow at residues 12–32 (IAVM…GLLA) and 42–62 (ALLV…LLIS). Histidine 147 serves as a coordination point for Zn(2+). Residue glutamate 148 is part of the active site. Histidine 151 serves as a coordination point for Zn(2+). Helical transmembrane passes span 162–182 (LIQG…GHVV) and 197–217 (FWIV…MIVM). Glutamate 224 is a Zn(2+) binding site.

It belongs to the peptidase M48B family. The cofactor is Zn(2+).

It localises to the cell inner membrane. The sequence is that of Protease HtpX from Pseudoalteromonas atlantica (strain T6c / ATCC BAA-1087).